The sequence spans 314 residues: Small ribosomal subunit biogenesis GTPase RsgA (314 aa).

A disordered region spans residues 1-21 (MKRAPTKQPAKPAARGGERAQ). Residues 85-246 (SDQFKSKLFA…LIDSPGFQEF (162 aa)) enclose the CP-type G domain. GTP contacts are provided by residues 134–137 (NKID) and 188–196 (GQSGMGKST). Zn(2+) contacts are provided by Cys270, Cys275, His277, and Cys283.

The protein belongs to the TRAFAC class YlqF/YawG GTPase family. RsgA subfamily. Monomer. Associates with 30S ribosomal subunit, binds 16S rRNA. Requires Zn(2+) as cofactor.

It localises to the cytoplasm. Functionally, one of several proteins that assist in the late maturation steps of the functional core of the 30S ribosomal subunit. Helps release RbfA from mature subunits. May play a role in the assembly of ribosomal proteins into the subunit. Circularly permuted GTPase that catalyzes slow GTP hydrolysis, GTPase activity is stimulated by the 30S ribosomal subunit. The polypeptide is Small ribosomal subunit biogenesis GTPase RsgA (Burkholderia pseudomallei (strain 1106a)).